A 389-amino-acid chain; its full sequence is MTTQHPDTPETGITPGGTSGAFRDVLSKDHARRGKPPLHFVDMTPEQRVEKAAELGLPKFRVKQLANHYFGHFDVNAAEFTDFPAAKRSEAAAAFFPQLITEVTRQVADEGTTIKTLWKLFDGSLIESVLMRYPTRTTLCISSQVGCGMDCPFCATGKLGLTRNMSTGEIIEQVRVAAKMMRDGEVAGGEGRLSNIVFMGMGEPMGNYNSVLSAVRQISAMPPEGFGISARNITVSTVGVVPGIKKLTAEGIPVRLAVSLHAPSDELRDELVPMNKRFNTKQVLDAAHDYWLASKRRVSIEYALMRGINDQAEHAQLLAKRLNHYGDNWAHVNPIPLNPIEGSKWTASKPEDEQRFLEILHRAGITATLRDTRGQDIDGACGQLAAKER.

Positions 1–23 are disordered; the sequence is MTTQHPDTPETGITPGGTSGAFR. The active-site Proton acceptor is Glu127. The Radical SAM core domain maps to 133-376; that stretch reads YPTRTTLCIS…ATLRDTRGQD (244 aa). A disulfide bridge links Cys140 with Cys381. [4Fe-4S] cluster is bound by residues Cys147, Cys151, and Cys154. S-adenosyl-L-methionine is bound by residues 202 to 203, Ser236, 259 to 261, and Asn338; these read GE and SLH. Residue Cys381 is the S-methylcysteine intermediate of the active site.

The protein belongs to the radical SAM superfamily. RlmN family. The cofactor is [4Fe-4S] cluster.

It is found in the cytoplasm. The enzyme catalyses adenosine(2503) in 23S rRNA + 2 reduced [2Fe-2S]-[ferredoxin] + 2 S-adenosyl-L-methionine = 2-methyladenosine(2503) in 23S rRNA + 5'-deoxyadenosine + L-methionine + 2 oxidized [2Fe-2S]-[ferredoxin] + S-adenosyl-L-homocysteine. It catalyses the reaction adenosine(37) in tRNA + 2 reduced [2Fe-2S]-[ferredoxin] + 2 S-adenosyl-L-methionine = 2-methyladenosine(37) in tRNA + 5'-deoxyadenosine + L-methionine + 2 oxidized [2Fe-2S]-[ferredoxin] + S-adenosyl-L-homocysteine. Functionally, specifically methylates position 2 of adenine 2503 in 23S rRNA and position 2 of adenine 37 in tRNAs. The protein is Probable dual-specificity RNA methyltransferase RlmN of Bifidobacterium longum (strain NCC 2705).